Here is a 332-residue protein sequence, read N- to C-terminus: Torsin-1A (332 aa).

An N-terminal signal peptide occupies residues 1 to 20; that stretch reads MKLGRAVLGLLLLAPSVVQA. The interval 91–251 is interaction with SNAPIN; sequence KPKKPLTLSL…VSVFNNKNSG (161 aa). An ATP-binding site is contributed by 102 to 109; the sequence is GWTGTGKN. 2 N-linked (GlcNAc...) (high mannose) asparagine glycosylation sites follow: N143 and N158. The interval 251-332 is interaction with KLC1; it reads GFWHSSLIDR…FTKLDYYYDD (82 aa). An interaction with SYNE3 region spans residues 312–332; sequence RVFSDKGCKTVFTKLDYYYDD.

This sequence belongs to the ClpA/ClpB family. Torsin subfamily. In terms of assembly, homohexamer. Interacts with TOR1B; the interaction may be specific of neural tissues. Interacts (ATP-bound) with TOR1AIP1 and TOR1AIP2; the interactions induce ATPase activity. Interacts with KLHL14; preferentially when ATP-free. Interacts with KLC1 (via TPR repeats); the interaction associates TOR1A with the kinesin oligomeric complex. Interacts with COPS4; the interaction associates TOR1A with the CSN complex. Interacts with SNAPIN; the interaction is direct and associates SNAPIN with the CSN complex. Interacts with STON2. Interacts (ATP-bound) with SYNE3 (via KASH domain); the interaction is required for SYNE3 nuclear envelope localization. Interacts with VIM; the interaction associates TOR1A with the cytoskeleton. Interacts with PLEC. Interacts (ATP-bound) with SLC6A3; regulates SLC6A3 transport to the plasma membrane. In terms of processing, N-glycosylated. In terms of tissue distribution, widely expressed. Highest levels in kidney and liver. In the brain, high levels found in the dopaminergic neurons of the substantia nigra pars compacta, as well as in the neocortex, hippocampus and cerebellum. Also highly expressed in the spinal cord.

The protein localises to the endoplasmic reticulum lumen. Its subcellular location is the nucleus membrane. It is found in the cell projection. It localises to the growth cone. The protein resides in the cytoplasmic vesicle membrane. The protein localises to the cytoplasmic vesicle. Its subcellular location is the secretory vesicle. It is found in the synaptic vesicle. It localises to the cytoplasm. The protein resides in the cytoskeleton. It catalyses the reaction ATP + H2O = ADP + phosphate + H(+). Functionally, protein with chaperone functions important for the control of protein folding, processing, stability and localization as well as for the reduction of misfolded protein aggregates. Involved in the regulation of synaptic vesicle recycling, controls STON2 protein stability in collaboration with the COP9 signalosome complex (CSN). In the nucleus, may link the cytoskeleton with the nuclear envelope, this mechanism seems to be crucial for the control of nuclear polarity, cell movement and, specifically in neurons, nuclear envelope integrity. Participates in the cellular trafficking and may regulate the subcellular location of multipass membrane proteins such as the dopamine transporter SLC6A3, leading to the modulation of dopamine neurotransmission. In the endoplasmic reticulum, plays a role in the quality control of protein folding by increasing clearance of misfolded proteins such as SGCE variants or holding them in an intermediate state for proper refolding. May have a redundant function with TOR1B in non-neural tissues. The sequence is that of Torsin-1A (TOR1A) from Homo sapiens (Human).